The chain runs to 562 residues: AT-rich interactive domain-containing protein 1 (562 aa).

The ARID domain maps to K43–N136. The region spanning P358 to M448 is the ELM2 domain.

The protein resides in the nucleus. In Arabidopsis thaliana (Mouse-ear cress), this protein is AT-rich interactive domain-containing protein 1 (ARID1).